Reading from the N-terminus, the 590-residue chain is Leucine-rich repeat transmembrane neuronal protein 4 (590 aa).

An N-terminal signal peptide occupies residues 1 to 30; it reads MGFRLITQLKGMSVFLVLFPTLLLVMLTGA. One can recognise an LRRNT domain in the interval 31–61; sequence QRACPKNCRCDGKIVYCESHAFADIPENISG. The Extracellular segment spans residues 31–424; it reads QRACPKNCRC…HEYEHVSFHK (394 aa). Asn58 carries an N-linked (GlcNAc...) asparagine glycan. LRR repeat units lie at residues 62–83, 86–107, 110–131, 134–155, 158–179, 182–203, 206–226, 230–251, 254–275, and 278–299; these read GSQG…QFAG, QLIW…AFQG, RLKE…TFHP, NLRN…QFKG, KLII…VFQD, NLDF…AFAG, KLKE…AHFP, NLRS…LTWT, SLHT…TFKC, and NLQK…TVNA. Asn126 carries an N-linked (GlcNAc...) asparagine glycan. Asn291 is a glycosylation site (N-linked (GlcNAc...) asparagine). The LRRCT domain occupies 311–362; it reads NMWECSRSICPLFYWLKNFKGNKESTMICAGPKHIQGEKVSDAVETYNICSD. The chain crosses the membrane as a helical span at residues 425 to 445; that stretch reads IIAGSVALFLSVAMILLVIYV. The Cytoplasmic segment spans residues 446–590; sequence SWKRYPASMK…PAIYLERITN (145 aa).

This sequence belongs to the LRRTM family. Peripherally associated with AMPAR complex. AMPAR complex consists of an inner core made of 4 pore-forming GluA/GRIA proteins (GRIA1, GRIA2, GRIA3 and GRIA4) and 4 major auxiliary subunits arranged in a twofold symmetry. One of the two pairs of distinct binding sites is occupied either by CNIH2, CNIH3 or CACNG2, CACNG3. The other harbors CACNG2, CACNG3, CACNG4, CACNG8 or GSG1L. This inner core of AMPAR complex is complemented by outer core constituents binding directly to the GluA/GRIA proteins at sites distinct from the interaction sites of the inner core constituents. Outer core constituents include at least PRRT1, PRRT2, CKAMP44/SHISA9, FRRS1L and NRN1. The proteins of the inner and outer core serve as a platform for other, more peripherally associated AMPAR constituents, including LRRTM4. Alone or in combination, these auxiliary subunits control the gating and pharmacology of the AMPAR complex and profoundly impact their biogenesis and protein processing. As to expression, predominantly in the brain (at protein level). Also expressed in the cerebellum and other tissues.

Its subcellular location is the cell membrane. It localises to the postsynaptic cell membrane. Functionally, may play a role in the development and maintenance of the vertebrate nervous system. Exhibits strong synaptogenic activity, restricted to excitatory presynaptic differentiation. In Mus musculus (Mouse), this protein is Leucine-rich repeat transmembrane neuronal protein 4 (Lrrtm4).